The following is a 256-amino-acid chain: DNA repair protein RecO (256 aa).

The protein belongs to the RecO family.

In terms of biological role, involved in DNA repair and RecF pathway recombination. This is DNA repair protein RecO from Streptococcus pneumoniae serotype 2 (strain D39 / NCTC 7466).